The chain runs to 1132 residues: Tyrosine-protein kinase JAK2 (1132 aa).

The tract at residues 1–239 is interaction with cytokine/interferon/growth hormone receptors; sequence MGMACLTMTE…RYRFRRFIQQ (239 aa). The region spanning 37 to 380 is the FERM domain; that stretch reads PVLLVYLYHS…GYYRLTADAH (344 aa). At Tyr119 the chain carries Phosphotyrosine; by autocatalysis. A phosphotyrosine mark is found at Tyr372 and Tyr373. The 82-residue stretch at 401–482 folds into the SH2; atypical domain; it reads HGPISMDFAI…SLKDLLNCYQ (82 aa). The residue at position 523 (Ser523) is a Phosphoserine. Residues 545–809 form the Protein kinase 1 domain; that stretch reads LIFNESLGQG…AIIRDLNSLF (265 aa). Phosphotyrosine is present on residues Tyr570 and Tyr813. The region spanning 849-1126 is the Protein kinase 2 domain; it reads LKFLQQLGKG…RDLALRVDQI (278 aa). 855-863 lines the ATP pocket; it reads LGKGNFGSV. Phosphotyrosine; by autocatalysis is present on Tyr868. An ATP-binding site is contributed by Lys882. Residues Tyr966 and Tyr972 each carry the phosphotyrosine; by autocatalysis modification. Asp976 (proton acceptor) is an active-site residue. Phosphotyrosine; by autocatalysis occurs at positions 1007 and 1008.

The protein belongs to the protein kinase superfamily. Tyr protein kinase family. JAK subfamily. In terms of assembly, interacts with IL23R, SKB1 and STAM2. Interacts with EPOR. Interacts with LYN. Interacts with SIRPA. Interacts with SH2B1. Interacts with TEC. Interacts with IFNGR2 (via intracellular domain). Interacts with LEPR (Isoform B). Interacts with HSP90AB1; promotes functional activation in a heat shock-dependent manner. Interacts with STRA6. Interacts with RHEX; this interaction occurs in a erythropoietin (EPO)-dependent manner. Interacts with ASB2; the interaction targets JAK2 for Notch-induced proteasomal degradation. Requires Mg(2+) as cofactor. In terms of processing, autophosphorylated, leading to regulate its activity. Leptin promotes phosphorylation on tyrosine residues, including phosphorylation on Tyr-813. Autophosphorylation on Tyr-119 in response to EPO down-regulates its kinase activity. Autophosphorylation on Tyr-868, Tyr-966 and Tyr-972 in response to growth hormone (GH) are required for maximal kinase activity. Also phosphorylated by TEC. Phosphorylated on tyrosine residues in response to interferon gamma signaling. Phosphorylated on tyrosine residues in response to a signaling cascade that is activated by increased cellular retinol. Post-translationally, undergoes Notch-induced ubiquitination and subsequent proteasomal degradation which is mediated by ASB1 or ASB2, the substrate-recognition components of probable ECS E3 ubiquitin-protein ligase complexes.

The protein localises to the endomembrane system. It is found in the cytoplasm. Its subcellular location is the nucleus. The enzyme catalyses L-tyrosyl-[protein] + ATP = O-phospho-L-tyrosyl-[protein] + ADP + H(+). Its activity is regulated as follows. Regulated by autophosphorylation, can both activate or decrease activity. Heme regulates its activity by enhancing the phosphorylation on Tyr-1007 and Tyr-1008. Functionally, non-receptor tyrosine kinase involved in various processes such as cell growth, development, differentiation or histone modifications. Mediates essential signaling events in both innate and adaptive immunity. In the cytoplasm, plays a pivotal role in signal transduction via its association with type I receptors such as growth hormone (GHR), prolactin (PRLR), leptin (LEPR), erythropoietin (EPOR), thrombopoietin (THPO); or type II receptors including IFN-alpha, IFN-beta, IFN-gamma and multiple interleukins. Following ligand-binding to cell surface receptors, phosphorylates specific tyrosine residues on the cytoplasmic tails of the receptor, creating docking sites for STATs proteins. Subsequently, phosphorylates the STATs proteins once they are recruited to the receptor. Phosphorylated STATs then form homodimer or heterodimers and translocate to the nucleus to activate gene transcription. For example, cell stimulation with erythropoietin (EPO) during erythropoiesis leads to JAK2 autophosphorylation, activation, and its association with erythropoietin receptor (EPOR) that becomes phosphorylated in its cytoplasmic domain. Then, STAT5 (STAT5A or STAT5B) is recruited, phosphorylated and activated by JAK2. Once activated, dimerized STAT5 translocates into the nucleus and promotes the transcription of several essential genes involved in the modulation of erythropoiesis. Part of a signaling cascade that is activated by increased cellular retinol and that leads to the activation of STAT5 (STAT5A or STAT5B). In addition, JAK2 mediates angiotensin-2-induced ARHGEF1 phosphorylation. Plays a role in cell cycle by phosphorylating CDKN1B. Cooperates with TEC through reciprocal phosphorylation to mediate cytokine-driven activation of FOS transcription. In the nucleus, plays a key role in chromatin by specifically mediating phosphorylation of 'Tyr-41' of histone H3 (H3Y41ph), a specific tag that promotes exclusion of CBX5 (HP1 alpha) from chromatin. Up-regulates the potassium voltage-gated channel activity of KCNA3. This is Tyrosine-protein kinase JAK2 from Pongo abelii (Sumatran orangutan).